Here is a 407-residue protein sequence, read N- to C-terminus: Argininosuccinate synthase (407 aa).

Residues 12 to 20 (AYSGGLDTS) and alanine 39 each bind ATP. L-citrulline-binding residues include tyrosine 92 and serine 97. Glycine 122 contributes to the ATP binding site. Residues threonine 124, asparagine 128, and aspartate 129 each coordinate L-aspartate. Position 128 (asparagine 128) interacts with L-citrulline. Positions 132, 182, 191, 267, and 279 each coordinate L-citrulline.

It belongs to the argininosuccinate synthase family. Type 1 subfamily. Homotetramer.

It localises to the cytoplasm. The catalysed reaction is L-citrulline + L-aspartate + ATP = 2-(N(omega)-L-arginino)succinate + AMP + diphosphate + H(+). It functions in the pathway amino-acid biosynthesis; L-arginine biosynthesis; L-arginine from L-ornithine and carbamoyl phosphate: step 2/3. In Campylobacter fetus subsp. fetus (strain 82-40), this protein is Argininosuccinate synthase.